The primary structure comprises 352 residues: Molybdenum import ATP-binding protein ModC (352 aa).

Positions 1–229 (MLELNFSQTL…SVMNPWLPKE (229 aa)) constitute an ABC transporter domain. Position 31-38 (31-38 (GVSGAGKT)) interacts with ATP. In terms of domain architecture, Mop spans 289 to 352 (QTSIRNVLRA…AQIKSVSITA (64 aa)).

The protein belongs to the ABC transporter superfamily. Molybdate importer (TC 3.A.1.8) family. The complex is composed of two ATP-binding proteins (ModC), two transmembrane proteins (ModB) and a solute-binding protein (ModA).

It is found in the cell inner membrane. It carries out the reaction molybdate(out) + ATP + H2O = molybdate(in) + ADP + phosphate + H(+). In terms of biological role, part of the ABC transporter complex ModABC involved in molybdenum import. Responsible for energy coupling to the transport system. This is Molybdenum import ATP-binding protein ModC from Escherichia coli (strain K12).